Consider the following 441-residue polypeptide: MSNTHNIHWSTPSKRIYDASDIPNFKRSIAYYKIRHTLSVVIEKVKGCDLPPGILDKSIVTRKINNIPPSNTTHSRPLDLPPPQGEEEGDKCNISHSSNQTIRGEANESNYEGLLRILEVLNRYIDETPPLKGPRRFGNLACRDWHEKMNTKMNDLLKDNIKIHNSSFNSEFDGFIKELKYYIENSFGSAIRLDYGTGHELSFLAFIGGLIDFKLLSLEELTGSDILTIFAKYYDLTRRLILVYSLEPAGSHGVWGLDDHYHLIYIFGAAQFNGDQDKIIPPVQQILTRPVLDRYKETNLYVNAISFIHKIKSGPFNEHSPIIFDIHSSVSLWSKVLSGLLKMFEVEVLGKFPVVQHFWFGSSLYPWRDFETNKELPIYKRDEDEMDEDSSGDFLNGNTGIKTTKHNISMTGAPWNLNATQRQDDLNSTTYRGRQPRLGRN.

Composition is skewed to polar residues over residues 66-75 (NIPPSNTTHS) and 421-432 (QRQDDLNSTTYR). 2 disordered regions span residues 66-100 (NIPP…SSNQ) and 421-441 (QRQD…LGRN).

It belongs to the PTPA-type PPIase family.

Its subcellular location is the cytoplasm. It localises to the nucleus. It carries out the reaction [protein]-peptidylproline (omega=180) = [protein]-peptidylproline (omega=0). Its function is as follows. PPIases accelerate the folding of proteins. It catalyzes the cis-trans isomerization of proline imidic peptide bonds in oligopeptides. Acts as a regulatory subunit for PP2A-like phosphatases modulating their activity or substrate specificity, probably by inducing a conformational change in the catalytic subunit, a direct target of the PPIase. Can reactivate inactive phosphatase PP2A-phosphatase methylesterase complexes (PP2Ai) in presence of ATP and Mg(2+) by dissociating the inactive form from the complex. The protein is Serine/threonine-protein phosphatase 2A activator 1 (RRD1) of Debaryomyces hansenii (strain ATCC 36239 / CBS 767 / BCRC 21394 / JCM 1990 / NBRC 0083 / IGC 2968) (Yeast).